The sequence spans 179 residues: Hypoxanthine-guanine phosphoribosyltransferase (179 aa).

Residues K42 and G43 each contribute to the diphosphate site. Mg(2+) is bound by residues E98 and D99. The Proton acceptor role is filled by E102. Residues K130, 151 to 152 (FV), and D158 each bind GMP. A diphosphate-binding site is contributed by R164.

It belongs to the purine/pyrimidine phosphoribosyltransferase family. Mg(2+) serves as cofactor.

Its subcellular location is the cytoplasm. The enzyme catalyses IMP + diphosphate = hypoxanthine + 5-phospho-alpha-D-ribose 1-diphosphate. It catalyses the reaction GMP + diphosphate = guanine + 5-phospho-alpha-D-ribose 1-diphosphate. It participates in purine metabolism; IMP biosynthesis via salvage pathway; IMP from hypoxanthine: step 1/1. The protein operates within purine metabolism; GMP biosynthesis via salvage pathway; GMP from guanine: step 1/1. In terms of biological role, purine salvage pathway enzyme that catalyzes the transfer of the ribosyl-5-phosphate group from 5-phospho-alpha-D-ribose 1-diphosphate (PRPP) to the N9 position of the 6-oxopurines hypoxanthine and guanine to form the corresponding ribonucleotides IMP (inosine 5'-monophosphate) and GMP (guanosine 5'-monophosphate), with the release of PPi. This chain is Hypoxanthine-guanine phosphoribosyltransferase (hpt), found in Staphylococcus epidermidis (strain ATCC 35984 / DSM 28319 / BCRC 17069 / CCUG 31568 / BM 3577 / RP62A).